The chain runs to 137 residues: Ribosomal RNA large subunit methyltransferase H (137 aa).

S-adenosyl-L-methionine contacts are provided by residues Leu56, Gly85, and 104 to 109 (LSPLTF).

The protein belongs to the RNA methyltransferase RlmH family. In terms of assembly, homodimer.

The protein resides in the cytoplasm. It carries out the reaction pseudouridine(1915) in 23S rRNA + S-adenosyl-L-methionine = N(3)-methylpseudouridine(1915) in 23S rRNA + S-adenosyl-L-homocysteine + H(+). Functionally, specifically methylates the pseudouridine at position 1915 (m3Psi1915) in 23S rRNA. This is Ribosomal RNA large subunit methyltransferase H from Prochlorococcus marinus (strain MIT 9515).